Here is a 132-residue protein sequence, read N- to C-terminus: Small ribosomal subunit protein uS8 (132 aa).

It belongs to the universal ribosomal protein uS8 family. In terms of assembly, part of the 30S ribosomal subunit. Contacts proteins S5 and S12.

Its function is as follows. One of the primary rRNA binding proteins, it binds directly to 16S rRNA central domain where it helps coordinate assembly of the platform of the 30S subunit. The polypeptide is Small ribosomal subunit protein uS8 (Lactobacillus helveticus (strain DPC 4571)).